Reading from the N-terminus, the 1813-residue chain is MARKKSSGLKITLIVLLAIVTIIAIALVAILPTKTPAVELVSTIPGKCPSAENDRLDEKINCIPDQFPTQALCAMQGCCWNPRNESPTPWCSFANNHGYEFEKISNPNINFEPNLKKNSPPTLFGDNITNLLLTTQSQTANRFRFKITDPNNQRYEVPHQFVNKDFSGPPASNPLYDVKITENPFSIKVIRKSNNKILFDTSIGPLVYSNQYLQISTKLPSKYIYGLGEHVHKRFRHDLYWKTWPIFTRDQLPGDNNNNLYGHQTFFMSIEDTSGKSFGVFLMNSNAMEVFIQPTPIVTYRVIGGILDFYIFLGDTPGQVVQQYQELTGRPAMPSYWSLGFQLSRWNYGSLDAVKEVVKRNRDARIPFDAQVTDIDYMEDKKDFTYNNKTFYGLPEFVKDLHDHGQKYIIILDPAISITSLANGNHYKTYERGNEQKVWVYQSDGTTPLIGEVWPGLTVYPDFTNPKCLDWWTNECSIFHEEIKYDGLWIDMNEVSSFVHGSTKGCSDNKLNYPPFIPDILDKLMYAKTICMDAIQHWGKQYDVHSLYGYSMAIATEKAIEKVFPNKRSFILTRSTFAGTGKHATHWLGDNTPSWEHMEWSITPMLEFGLFGMPFIGADICGFVVDTTEELCRRWMQIGAFYPYFRDHNAGGYMPQDPAYFGQDSLLVNTSRHYLDIWYTLLPYLYNLLYKAYVYGETVARPFLYEFYEDTNSWIEDLQFLWGSALLITPVLRQGADRMSAYIPDATWYDYETGGKRTWRKQRVEMYLPGDKIGLHVRGGYIIPTQQPAVNTTASRKNPLGLIIALDNNAAKGDFFWDDGESKDSIEKGKYILYTFSVLNNELDIICTHSSYQEGTTLAFETIKILGLANTVTQVQVAENNQQTIIHNSFTYHASNQSLIIDNLKLNLGKNFTVQWNQVSLDSEKIDCFPDNNPENKQNCEERGCLWEPNSAAEGPRCYFPKQYNPYLVKSTQYSSMGITVDLELNTATARIKMPSNPISVLRLEVKYHKNDMLQFKIYDPQNKRYEVPIPMDIPTTPTSTYENRLYDVNIKGNPFGIQIRRRSTGRIFWDSCLPWGLLLMNQFIQISTRLPSEYVYGFGGVGHRQFKQDLNWHKWGMFNRDQPSGYKISSYGFQPYIYMALGDGGNAHGVFLLNSNAMDVTFQPNPALTYRTIGGILDFYMFLGPNPEVATKQYHEVIGRPVKPPYWALGFHLCRYGYENTSEIRQLYEDMVSAQIPYDVQYTDIDYMERQLDFTIGKGFQDLPEFVDKIRDEGMKYIIILDPAISGNETQDYLAFQRGIEKDVFVKWPNTQDICWAKVWPDLPNITIDDSLTEDEAVNASRAHVAFPDFLKTSTAEWWATEIEDFYNTYMKFDGLWIDMNEPSSFVHGSVDNKCRNEILNYPPYMPALTKRNEGLHFRTMCMETQQTLSNGSSVLHYDVHNLYGWSQAKPTYDALQKTTGKRGIVISRSTYPSAGRWAGHWLGDNYANWDKIGKSIIGMMEFSLFGISFTGADICGFFNNSDYELCARWMQVGAFYPYSRNHNITDTRRQDPVSWNETFASMSTDILNIRYNLLPYFYTQMHDIHANGGTVIRPLLHEFFSETGTWDIYKQFLWGPAFMVTPVVEPYSESVTGYVPDGRWLDYHTGQDIGLRKRLHTLDAPLYKINLHVCGGHILPCQEPAQNTYFSRQNYMKLIVAADDNQTAQGYLFWDDGESIDTYEKGQYLLVQFNLNKATLTSTILKNGYINTREMRLGFINVWGKGNTVVQEVNITYKGNKESVKFSQEANKQILNIDLTANNIVLDEPIEISWT.

Residues 1–12 lie on the Cytoplasmic side of the membrane; it reads MARKKSSGLKIT. Ser-7 is subject to Phosphoserine; by PKA. Residues 13–32 traverse the membrane as a helical; Signal-anchor for type II membrane protein segment; the sequence is LIVLLAIVTIIAIALVAILP. The Lumenal portion of the chain corresponds to 33 to 1813; that stretch reads TKTPAVELVS…LDEPIEISWT (1781 aa). The 50-residue stretch at 46–95 folds into the P-type 1 domain; it reads GKCPSAENDRLDEKINCIPDQFPTQALCAMQGCCWNPRNESPTPWCSFAN. 3 cysteine pairs are disulfide-bonded: Cys-48/Cys-79, Cys-62/Cys-78, and Cys-73/Cys-91. The isomaltase stretch occupies residues 95-991; that stretch reads NNHGYEFEKI…DLELNTATAR (897 aa). N-linked (GlcNAc...) asparagine glycosylation occurs at Asn-127. Asp-250 and Asp-374 together coordinate substrate. Tyr-377 carries the sulfotyrosine modification. Asn-388 is a glycosylation site (N-linked (GlcNAc...) asparagine). Asp-491 serves as the catalytic Nucleophile; for isomaltase activity. Cys-506 and Cys-531 are disulfide-bonded. Substrate is bound at residue Arg-574. The For isomaltase activity role is filled by Asp-590. Cys-621 and Cys-632 are oxidised to a cystine. Residue His-648 participates in substrate binding. N-linked (GlcNAc...) asparagine glycosylation is found at Asn-669, Asn-791, Asn-896, and Asn-911. Positions 917 to 962 constitute a P-type 2 domain; the sequence is NQVSLDSEKIDCFPDNNPENKQNCEERGCLWEPNSAAEGPRCYFPK. Positions 992–1813 are sucrase; it reads IKMPSNPISV…LDEPIEISWT (822 aa). 2 N-linked (GlcNAc...) asparagine glycosylation sites follow: Asn-1221 and Asn-1289. Tyr-1294 is subject to Sulfotyrosine. Asn-1326 and Asn-1340 each carry an N-linked (GlcNAc...) asparagine glycan. Sulfotyrosine is present on residues Tyr-1368 and Tyr-1371. Asp-1380 functions as the Nucleophile; for sucrase activity in the catalytic mechanism. Glu-1383 acts as the For sucrase activity in catalysis. A glycan (N-linked (GlcNAc...) asparagine) is linked at Asn-1432. Catalysis depends on Asp-1486, which acts as the Proton donor; for sucrase activity. N-linked (GlcNAc...) asparagine glycans are attached at residues Asn-1521, Asn-1545, Asn-1558, Asn-1703, and Asn-1772.

It belongs to the glycosyl hydrolase 31 family. The resulting sucrase and isomaltase subunits stay associated with one another in a complex by non-covalent linkages. Post-translationally, the precursor is proteolytically cleaved when exposed to pancreatic proteases in the intestinal lumen. Sulfated.

It is found in the apical cell membrane. The catalysed reaction is Hydrolysis of sucrose and maltose by an alpha-D-glucosidase-type action.. It catalyses the reaction Hydrolysis of (1-&gt;6)-alpha-D-glucosidic linkages in some oligosaccharides produced from starch and glycogen by alpha-amylase, and in isomaltose.. Plays an important role in the final stage of carbohydrate digestion. Isomaltase activity is specific for both alpha-1,4- and alpha-1,6-oligosaccharides. This chain is Sucrase-isomaltase, intestinal (SI), found in Suncus murinus (Asian house shrew).